Consider the following 274-residue polypeptide: Octanoyltransferase LipM (274 aa).

Residues 32–244 enclose the BPL/LPL catalytic domain; that stretch reads GEVPPTLRFY…GFARALGLTL (213 aa). Cysteine 146 serves as the catalytic Acyl-thioester intermediate.

It belongs to the octanoyltransferase LipM family. As to quaternary structure, monomer.

It carries out the reaction octanoyl-[ACP] + L-lysyl-[protein] = N(6)-octanoyl-L-lysyl-[protein] + holo-[ACP] + H(+). The protein operates within protein modification; protein lipoylation via endogenous pathway; protein N(6)-(lipoyl)lysine from octanoyl-[acyl-carrier-protein]. In terms of biological role, catalyzes the transfer of endogenously produced octanoic acid from octanoyl-acyl-carrier-protein onto the lipoyl domain of GcvH, an intermediate carrier during protein lipoylation. This chain is Octanoyltransferase LipM, found in Symbiobacterium thermophilum (strain DSM 24528 / JCM 14929 / IAM 14863 / T).